Here is a 273-residue protein sequence, read N- to C-terminus: Dermonecrotic toxin LapSicTox-alphaIB1ai (273 aa).

Residue His5 is part of the active site. Positions 25 and 27 each coordinate Mg(2+). The Nucleophile role is filled by His41. 2 disulfide bridges follow: Cys45–Cys51 and Cys47–Cys190. Asp85 is a Mg(2+) binding site. Residue Asn250 is glycosylated (N-linked (GlcNAc...) asparagine).

This sequence belongs to the arthropod phospholipase D family. Class II subfamily. It depends on Mg(2+) as a cofactor. As to expression, expressed by the venom gland.

The protein resides in the secreted. The enzyme catalyses an N-(acyl)-sphingosylphosphocholine = an N-(acyl)-sphingosyl-1,3-cyclic phosphate + choline. The catalysed reaction is an N-(acyl)-sphingosylphosphoethanolamine = an N-(acyl)-sphingosyl-1,3-cyclic phosphate + ethanolamine. It catalyses the reaction a 1-acyl-sn-glycero-3-phosphocholine = a 1-acyl-sn-glycero-2,3-cyclic phosphate + choline. It carries out the reaction a 1-acyl-sn-glycero-3-phosphoethanolamine = a 1-acyl-sn-glycero-2,3-cyclic phosphate + ethanolamine. In terms of biological role, dermonecrotic toxins cleave the phosphodiester linkage between the phosphate and headgroup of certain phospholipids (sphingolipid and lysolipid substrates), forming an alcohol (often choline) and a cyclic phosphate. This toxin acts on sphingomyelin (SM). It may also act on ceramide phosphoethanolamine (CPE), lysophosphatidylcholine (LPC) and lysophosphatidylethanolamine (LPE), but not on lysophosphatidylserine (LPS), and lysophosphatidylglycerol (LPG). It acts by transphosphatidylation, releasing exclusively cyclic phosphate products as second products. Induces dermonecrosis, hemolysis, increased vascular permeability, edema, inflammatory response, and platelet aggregation. This Loxosceles apachea (Apache recluse spider) protein is Dermonecrotic toxin LapSicTox-alphaIB1ai.